Consider the following 333-residue polypeptide: Protoheme IX farnesyltransferase (333 aa).

Transmembrane regions (helical) follow at residues 64-84, 110-130, 133-153, 161-181, 189-209, 246-266, and 287-307; these read LICT…LNCL, TVFL…VSGV, LAAG…TVIL, IVFG…AATG, WLFG…AILL, IMGV…LLPF, and AKSL…LLLI.

The protein belongs to the UbiA prenyltransferase family. Protoheme IX farnesyltransferase subfamily.

The protein resides in the cell inner membrane. It carries out the reaction heme b + (2E,6E)-farnesyl diphosphate + H2O = Fe(II)-heme o + diphosphate. The protein operates within porphyrin-containing compound metabolism; heme O biosynthesis; heme O from protoheme: step 1/1. Its function is as follows. Converts heme B (protoheme IX) to heme O by substitution of the vinyl group on carbon 2 of heme B porphyrin ring with a hydroxyethyl farnesyl side group. The protein is Protoheme IX farnesyltransferase of Prochlorococcus marinus (strain MIT 9215).